The chain runs to 397 residues: Lysophospholipid transporter LplT (397 aa).

The Periplasmic portion of the chain corresponds to Met-1 to Lys-17. The chain crosses the membrane as a helical span at residues Ala-18–Leu-38. At Ala-39–Pro-52 the chain is on the cytoplasmic side. A helical transmembrane segment spans residues Ile-53–Ala-73. The Periplasmic segment spans residues Asp-74–Leu-90. A helical transmembrane segment spans residues Leu-91–Val-111. Topologically, residues Gly-112–Thr-144 are cytoplasmic. A helical transmembrane segment spans residues Ile-145–Val-165. Residue Ala-166 is a topological domain, periplasmic. A helical transmembrane segment spans residues Leu-167 to Leu-187. Over Ala-188–Ser-226 the chain is Cytoplasmic. A helical membrane pass occupies residues Leu-227 to Leu-247. The Periplasmic portion of the chain corresponds to Gly-248–Thr-256. The chain crosses the membrane as a helical span at residues Tyr-257–Val-277. Topologically, residues Thr-278–Glu-280 are cytoplasmic. The helical transmembrane segment at Thr-281–Leu-301 threads the bilayer. Topologically, residues Gln-302–Glu-304 are periplasmic. The helical transmembrane segment at Leu-305–Pro-325 threads the bilayer. The Cytoplasmic segment spans residues Leu-326–Ala-343. The helical transmembrane segment at Ile-344–Leu-364 threads the bilayer. Residues Ala-365–Val-366 are Periplasmic-facing. Residues Met-367–Ile-387 traverse the membrane as a helical segment. The Cytoplasmic portion of the chain corresponds to Thr-388–His-397.

It belongs to the major facilitator superfamily. LplT (TC 2.A.1.42) family.

The protein localises to the cell inner membrane. Catalyzes the facilitated diffusion of 2-acyl-glycero-3-phosphoethanolamine (2-acyl-GPE) into the cell. This is Lysophospholipid transporter LplT from Escherichia coli O8 (strain IAI1).